The following is a 323-amino-acid chain: Octaprenyl diphosphate synthase (323 aa).

Residues lysine 45, arginine 48, and histidine 77 each contribute to the isopentenyl diphosphate site. Positions 84 and 88 each coordinate Mg(2+). Residue arginine 93 coordinates an all-trans-polyprenyl diphosphate. Arginine 94 is a binding site for isopentenyl diphosphate. An all-trans-polyprenyl diphosphate is bound by residues lysine 170, threonine 171, and glutamine 208.

The protein belongs to the FPP/GGPP synthase family. Requires Mg(2+) as cofactor.

The enzyme catalyses 5 isopentenyl diphosphate + (2E,6E)-farnesyl diphosphate = all-trans-octaprenyl diphosphate + 5 diphosphate. Its function is as follows. Supplies octaprenyl diphosphate, the precursor for the side chain of the isoprenoid quinones ubiquinone and menaquinone. This Escherichia coli (strain K12) protein is Octaprenyl diphosphate synthase (ispB).